A 114-amino-acid chain; its full sequence is Lymphotactin (114 aa).

Residues Met-1–Gly-21 form the signal peptide. Residues Cys-32 and Cys-69 are joined by a disulfide bond. A disordered region spans residues Arg-91–Gly-114.

Belongs to the intercrine gamma family. As to expression, highest level in spleen, lower in peripheral leukocytes and very low levels in lung, colon and small intestine.

It localises to the secreted. Chemotactic activity for lymphocytes but not for monocytes or neutrophils. In thymus, mediates medullary accumulation of thymic dendritic cells and contributes to regulatoy T cell development, playing a role in self-tolerance establishment. The polypeptide is Lymphotactin (XCL1) (Homo sapiens (Human)).